The chain runs to 213 residues: Endoplasmic reticulum vesicle protein 25 (213 aa).

The first 20 residues, 1 to 20 (MILRIPSLLYLFTLLTAVYA), serve as a signal peptide directing secretion. Over 21-181 (VKFDLTSDRN…TNESTNQRVK (161 aa)) the chain is Lumenal. In terms of domain architecture, GOLD spans 33 to 122 (PKCIWNFASA…VRSVELDVDI (90 aa)). Residues 182–202 (VFSVLIICCTIGLGVWQLLHL) traverse the membrane as a helical segment. The Cytoplasmic portion of the chain corresponds to 203–213 (RSFFKRKYLID).

It belongs to the EMP24/GP25L family.

The protein resides in the endoplasmic reticulum membrane. Its subcellular location is the golgi apparatus membrane. Its function is as follows. Constituent of COPII-coated endoplasmic reticulum-derived transport vesicles. Required for efficient transport of a subset of secretory proteins to the Golgi. Facilitates retrograde transport from the Golgi to the endoplasmic reticulum. The polypeptide is Endoplasmic reticulum vesicle protein 25 (ERV25) (Cryptococcus neoformans var. neoformans serotype D (strain JEC21 / ATCC MYA-565) (Filobasidiella neoformans)).